The primary structure comprises 360 residues: Transcriptional coactivator MYCFIDRAFT_190109 (360 aa).

Residues 3 to 67 (GMALNQLLAC…GFLHEPRPGQ (65 aa)) form the HTH iclR-type domain. Positions 33–52 (ARDVADLTGVPETQLCRVVR) form a DNA-binding region, H-T-H motif.

It localises to the nucleus. Functionally, transcriptional coactivator; part of the gene cluster that mediates the biosynthesis of an emodin derivative that may be involved in black Sigatoka disease of banana. With MYCFIDRAFT_198930, coregulates the production of the PKS8-1 cluster product. In Pseudocercospora fijiensis (strain CIRAD86) (Black leaf streak disease fungus), this protein is Transcriptional coactivator MYCFIDRAFT_190109.